The sequence spans 61 residues: Small ribosomal subunit protein uS14 (61 aa).

Residues Cys-24, Cys-27, Cys-40, and Cys-43 each coordinate Zn(2+).

Belongs to the universal ribosomal protein uS14 family. Zinc-binding uS14 subfamily. In terms of assembly, part of the 30S ribosomal subunit. Contacts proteins S3 and S10. The cofactor is Zn(2+).

Functionally, binds 16S rRNA, required for the assembly of 30S particles and may also be responsible for determining the conformation of the 16S rRNA at the A site. In Campylobacter fetus subsp. fetus (strain 82-40), this protein is Small ribosomal subunit protein uS14.